The primary structure comprises 247 residues: 1-(5-phosphoribosyl)-5-[(5-phosphoribosylamino)methylideneamino] imidazole-4-carboxamide isomerase (247 aa).

Asp-8 serves as the catalytic Proton acceptor. The Proton donor role is filled by Asp-129.

The protein belongs to the HisA/HisF family.

It is found in the cytoplasm. It carries out the reaction 1-(5-phospho-beta-D-ribosyl)-5-[(5-phospho-beta-D-ribosylamino)methylideneamino]imidazole-4-carboxamide = 5-[(5-phospho-1-deoxy-D-ribulos-1-ylimino)methylamino]-1-(5-phospho-beta-D-ribosyl)imidazole-4-carboxamide. Its pathway is amino-acid biosynthesis; L-histidine biosynthesis; L-histidine from 5-phospho-alpha-D-ribose 1-diphosphate: step 4/9. In Solidesulfovibrio magneticus (strain ATCC 700980 / DSM 13731 / RS-1) (Desulfovibrio magneticus), this protein is 1-(5-phosphoribosyl)-5-[(5-phosphoribosylamino)methylideneamino] imidazole-4-carboxamide isomerase.